A 620-amino-acid chain; its full sequence is Guanylate cyclase soluble subunit beta-1 (620 aa).

Heme is bound at residue His-105. In terms of domain architecture, Guanylate cyclase spans 421-554 (TILFSGIVGF…NTVNLTSRTE (134 aa)).

This sequence belongs to the adenylyl cyclase class-4/guanylyl cyclase family. In terms of assembly, the active enzyme is formed by a heterodimer of an alpha and a beta subunit. Heterodimer with GUCY1A1. Can also form inactive homodimers in vitro. It depends on heme as a cofactor.

It localises to the cytoplasm. The enzyme catalyses GTP = 3',5'-cyclic GMP + diphosphate. Its activity is regulated as follows. Activated by nitric oxide in the presence of magnesium or manganese ions. Functionally, mediates responses to nitric oxide (NO) by catalyzing the biosynthesis of the signaling molecule cGMP. The protein is Guanylate cyclase soluble subunit beta-1 (Gucy1b1) of Mus musculus (Mouse).